A 183-amino-acid polypeptide reads, in one-letter code: MPRSQRNDNFIDKTFTILADILIRILPTTKREREAFIYYRDGMSAQSEGEYAEALGSYYKAMRLEIDSYDRSYILYNIGLIHTSNGNHAKALEYYFQALERNSFLPQAFNNMAVICHYRGEQAIYQGDLEISEAWFDQAAEYWRRAIALSPDNYAEAQNWLKITGRFSPSHRWESWNNSTRVA.

TPR repeat units lie at residues 35 to 68 (AFIY…EIDS), 72 to 105 (SYIL…NSFL), and 120 to 153 (GEQA…SPDN).

It belongs to the Ycf3 family.

The protein localises to the plastid. Its subcellular location is the chloroplast thylakoid membrane. In terms of biological role, essential for the assembly of the photosystem I (PSI) complex. May act as a chaperone-like factor to guide the assembly of the PSI subunits. The protein is Photosystem I assembly protein Ycf3 of Adiantum capillus-veneris (Maidenhair fern).